The following is a 327-amino-acid chain: Pyruvate dehydrogenase E1 component subunit beta (327 aa).

Glutamate 60 is a thiamine diphosphate binding site.

As to quaternary structure, heterodimer of an alpha and a beta chain. Thiamine diphosphate serves as cofactor.

It catalyses the reaction N(6)-[(R)-lipoyl]-L-lysyl-[protein] + pyruvate + H(+) = N(6)-[(R)-S(8)-acetyldihydrolipoyl]-L-lysyl-[protein] + CO2. Functionally, the pyruvate dehydrogenase complex catalyzes the overall conversion of pyruvate to acetyl-CoA and CO(2). It contains multiple copies of three enzymatic components: pyruvate dehydrogenase (E1), dihydrolipoamide acetyltransferase (E2) and lipoamide dehydrogenase (E3). This Acholeplasma laidlawii protein is Pyruvate dehydrogenase E1 component subunit beta (pdhB).